The chain runs to 34 residues: Cytochrome b6-f complex subunit 7 (34 aa).

A helical membrane pass occupies residues 9 to 27; sequence AILSFGLIFVGWGLGALLL.

It belongs to the PetM family. In terms of assembly, the 4 large subunits of the cytochrome b6-f complex are cytochrome b6, subunit IV (17 kDa polypeptide, PetD), cytochrome f and the Rieske protein, while the 4 small subunits are PetG, PetL, PetM and PetN. The complex functions as a dimer.

The protein resides in the cellular thylakoid membrane. Functionally, component of the cytochrome b6-f complex, which mediates electron transfer between photosystem II (PSII) and photosystem I (PSI), cyclic electron flow around PSI, and state transitions. This Nostoc punctiforme (strain ATCC 29133 / PCC 73102) protein is Cytochrome b6-f complex subunit 7.